Consider the following 30-residue polypeptide: Rothein 3.3 (30 aa).

A Leucine amide modification is found at Leu-30.

Expressed by the skin dorsal glands.

It localises to the secreted. Its function is as follows. Lacks antimicrobial activity. Does not inhibit the formation of NO by neuronal nitric oxide. The polypeptide is Rothein 3.3 (Litoria rothii (Roth's tree frog)).